The chain runs to 400 residues: N(alpha)-acyl-glutamine aminoacylase (400 aa).

It belongs to the peptidase M20 family. The cofactor is Zn(2+).

The catalysed reaction is an N(2)-acyl-L-glutamine + H2O = a carboxylate + L-glutamine. The enzyme catalyses N(2)-[(2E)-3-methylhex-2-enoyl]-L-glutaminate + H2O = (2E)-3-methylhex-2-enoate + L-glutamine. It carries out the reaction N(2)-(3-hydroxy-3-methylhexanoyl)-L-glutaminate + H2O = 3-hydroxy-3-methylhexanoate + L-glutamine. With respect to regulation, partial loss of activity with the combination Mn(2+) and chelating agents. Activity is lost in presence of 0.5 mM dithiothreitol. Hydrolyzes odorless N-alpha-acyl-L-glutamine conjugates of short- and medium-chain fatty acids, releasing human axillary malodor compounds. The enzyme is highly specific for the glutamine residue but has a low specificity for the acyl part of the substrate. The two most common products are 3-methyl-2-hexenoic acid (3M2H) and 3-hydroxy-3-methyl-hexanoic acid (HMHA), which are produced from the odorless precursors N-alpha-3-methyl-2-hexenoyl-L-glutamine (3M2H-Gln) and N-alpha-3-hydroxy-3-methylhexanoyl-L-glutamine (HMHA-Gln). In addition, over 28 different carboxylic acids contributing to human body odor are released by this enzyme from odorless axilla secretions, including several aliphatic 3-hydroxy acids with 4-Me branches, 3,4-unsaturated, 4-Et-branched aliphatic acids, and a variety of degradation products of amino acids. This is N(alpha)-acyl-glutamine aminoacylase from Corynebacterium striatum.